The chain runs to 1396 residues: G2/mitotic-specific cyclin-B3 (1396 aa).

Disordered regions lie at residues 1–64 (MPPP…TNAS), 259–398 (KEKP…PQME), and 477–500 (TTEKDPPSQWPSALPKKHISPGEL). The span at 10–34 (SKLETEKAQSNKITPREEQQSEKIG) shows a compositional bias: basic and acidic residues. The D-box motif lies at 54 to 62 (RSVFEDVTN). Over residues 264 to 273 (VKKPHFRKKK) the composition is skewed to basic residues. The span at 306–315 (LQENTNNKDA) shows a compositional bias: polar residues. A Phosphoserine modification is found at Ser-703. The disordered stretch occupies residues 775–796 (VDEPLSHQSPHIQNHSDTTKEA). Residues 780-790 (SHQSPHIQNHS) show a composition bias toward polar residues.

This sequence belongs to the cyclin family. Cyclin AB subfamily. In terms of assembly, interacts with CDK2 kinase. Post-translationally, ubiquitinated. Ubiquitination leads to its degradation during anaphase entry, after degradation of CCNB1. In terms of tissue distribution, expressed in testis. Also expressed in the fetal ovary, but not in the adult.

It localises to the nucleus. Cyclins are positive regulatory subunits of the cyclin-dependent kinases (CDKs), and thereby play an essential role in the control of the cell cycle, notably via their destruction during cell division. Its tissue specificity suggest that it may be required during early meiotic prophase I. The chain is G2/mitotic-specific cyclin-B3 (Ccnb3) from Mus musculus (Mouse).